A 177-amino-acid chain; its full sequence is SAYSvFN domain-containing protein 1 (177 aa).

At 1–100 the chain is on the cytoplasmic side; sequence MADFQEQLRQ…CLKYTLWTVY (100 aa). The span at 57 to 70 shows a compositional bias: polar residues; that stretch reads SENSQDEAVTSSES. The interval 57-85 is disordered; the sequence is SENSQDEAVTSSESELVPEEQPTRSTDHH. Positions 101 to 121 form an intramembrane region, helical; that stretch reads LLFWITLYVIAIKLSFGLVFL. Residues 122–177 lie on the Cytoplasmic side of the membrane; sequence MFSALFGIYFNTRTEPKKRNEMSAYSVFNKNCESIDGTLKAEQFEREIRYGSGSVR.

Belongs to the SAYSD1 family.

It is found in the endoplasmic reticulum membrane. Ufmylation 'reader' component of a translocation-associated quality control pathway, a mechanism that takes place when a ribosome has stalled during translation, and which is required to degrade clogged substrates. Specifically recognizes and binds ufmylated ribosomes when a ribosome has stalled, promoting the transport of stalled nascent chain to lysosomes for degradation. The sequence is that of SAYSvFN domain-containing protein 1 from Drosophila melanogaster (Fruit fly).